The chain runs to 317 residues: Putative toluene-4-sulfonate monooxygenase system reductase subunit TsaB2 (317 aa).

Positions 4–106 constitute an FAD-binding FR-type domain; that stretch reads DVPVTVAAVR…SAPRNLFEMA (103 aa). 110 to 220 is an NAD(+) binding site; the sequence is RRVLLLAGGI…PGSVRMERFK (111 aa). In terms of domain architecture, 2Fe-2S ferredoxin-type spans 232-317; that stretch reads FELVLQRAGL…CGGGRLVLDI (86 aa). [2Fe-2S] cluster contacts are provided by Cys266, Cys271, and Cys274.

As to quaternary structure, monomer. Part of the p-toluenesulfonate methyl-monooxygenase complex TsaBM, comprising the reductase TsaB and the oxygenase TsaM. FMN serves as cofactor.

Involved in the toluene-4-sulfonate degradation pathway. The chain is Putative toluene-4-sulfonate monooxygenase system reductase subunit TsaB2 (tsaB2) from Comamonas testosteroni (Pseudomonas testosteroni).